The primary structure comprises 320 residues: Pyrroline-5-carboxylate reductase 2 (320 aa).

Ser-2 carries the N-acetylserine modification. NADP(+)-binding positions include 6 to 11 (IGAGQL) and Ser-34. NADPH-binding residues include Ala-8, Gln-10, Leu-11, Ser-34, Glu-36, Asn-56, Val-70, Lys-71, and Ala-97. NADP(+) contacts are provided by residues Asn-56, 69-72 (AVKP), and 95-97 (CAA). L-proline is bound at residue Glu-164. Residue Asn-230 coordinates NADPH. 2 residues coordinate L-proline: Ala-237 and Thr-238. Over residues 295-305 (PTVSTLTPSSP) the composition is skewed to low complexity. Positions 295–320 (PTVSTLTPSSPGKLLTRSLALGGKKD) are disordered. Ser-304 is modified (phosphoserine).

The protein belongs to the pyrroline-5-carboxylate reductase family. Homodecamer; composed of 5 homodimers. Interacts with LTO1. Detected in erythrocytes (at protein level). Expressed in fetal brain.

It localises to the cytoplasm. Its subcellular location is the mitochondrion. The enzyme catalyses L-proline + NADP(+) = (S)-1-pyrroline-5-carboxylate + NADPH + 2 H(+). It carries out the reaction L-proline + NAD(+) = (S)-1-pyrroline-5-carboxylate + NADH + 2 H(+). The protein operates within amino-acid biosynthesis; L-proline biosynthesis; L-proline from L-glutamate 5-semialdehyde: step 1/1. Its activity is regulated as follows. Subject to competitive inhibition by NADP. Was reported not to be inhibited by proline. However other study demonstrated an inhibition by proline. Functionally, oxidoreductase that catalyzes the last step in proline biosynthesis, which corresponds to the reduction of pyrroline-5-carboxylate to L-proline using NAD(P)H. At physiologic concentrations, has higher specific activity in the presence of NADH. Involved in cellular response to oxidative stress. In some cell types, such as erythrocytes, its primary function may be the generation of NADP(+). The sequence is that of Pyrroline-5-carboxylate reductase 2 from Homo sapiens (Human).